The sequence spans 447 residues: Signal recognition particle 54 kDa protein (447 aa).

GTP is bound by residues 105–112 (GVQGSGKT), 187–191 (DTAGR), and 247–250 (TKMD).

Belongs to the GTP-binding SRP family. SRP54 subfamily. Part of the signal recognition particle protein translocation system, which is composed of SRP and FtsY. Archaeal SRP consists of a 7S RNA molecule of 300 nucleotides and two protein subunits: SRP54 and SRP19.

The protein localises to the cytoplasm. The catalysed reaction is GTP + H2O = GDP + phosphate + H(+). Functionally, involved in targeting and insertion of nascent membrane proteins into the cytoplasmic membrane. Binds to the hydrophobic signal sequence of the ribosome-nascent chain (RNC) as it emerges from the ribosomes. The SRP-RNC complex is then targeted to the cytoplasmic membrane where it interacts with the SRP receptor FtsY. This Hyperthermus butylicus (strain DSM 5456 / JCM 9403 / PLM1-5) protein is Signal recognition particle 54 kDa protein.